The following is a 592-amino-acid chain: Putative esterase (592 aa).

The chain crosses the membrane as a helical span at residues 12 to 32; it reads LTLIAYLSVLMGVSVYFYVLI. N-linked (GlcNAc...) asparagine; by host glycosylation is found at Asn68, Asn83, Asn95, Asn447, and Asn510. Residue His513 is the Charge relay system of the active site. N-linked (GlcNAc...) asparagine; by host glycosylation occurs at Asn528.

The protein belongs to the type-B carboxylesterase/lipase family.

It localises to the membrane. It carries out the reaction a carboxylic ester + H2O = an alcohol + a carboxylate + H(+). In Spodoptera frugiperda (Fall armyworm), this protein is Putative esterase.